The following is a 414-amino-acid chain: Histidine--tRNA ligase (414 aa).

The protein belongs to the class-II aminoacyl-tRNA synthetase family. Homodimer.

The protein resides in the cytoplasm. The enzyme catalyses tRNA(His) + L-histidine + ATP = L-histidyl-tRNA(His) + AMP + diphosphate + H(+). This chain is Histidine--tRNA ligase, found in Endomicrobium trichonymphae.